We begin with the raw amino-acid sequence, 692 residues long: Elongation factor G (692 aa).

Positions Asn8 to Thr283 constitute a tr-type G domain. GTP is bound by residues Ala17–Thr24, Asp81–His85, and Asn135–Asp138.

Belongs to the TRAFAC class translation factor GTPase superfamily. Classic translation factor GTPase family. EF-G/EF-2 subfamily.

Its subcellular location is the cytoplasm. Catalyzes the GTP-dependent ribosomal translocation step during translation elongation. During this step, the ribosome changes from the pre-translocational (PRE) to the post-translocational (POST) state as the newly formed A-site-bound peptidyl-tRNA and P-site-bound deacylated tRNA move to the P and E sites, respectively. Catalyzes the coordinated movement of the two tRNA molecules, the mRNA and conformational changes in the ribosome. This chain is Elongation factor G (fusA), found in Helicobacter pylori (strain J99 / ATCC 700824) (Campylobacter pylori J99).